The chain runs to 421 residues: Large ribosomal subunit protein uL4 (421 aa).

The residue at position 2 (Ala-2) is an N-acetylalanine. Residue Lys-14 is modified to N6-acetyllysine. Arg-97 is subject to Omega-N-methylarginine. The residue at position 106 (Lys-106) is an N6-acetyllysine. A Glycyl lysine isopeptide (Lys-Gly) (interchain with G-Cter in SUMO2) cross-link involves residue Lys-239. An N6-acetyllysine modification is found at Lys-259. Thr-266 is subject to Phosphothreonine. Phosphoserine is present on residues Ser-290 and Ser-295. Arg-300 bears the Citrulline mark. A Glycyl lysine isopeptide (Lys-Gly) (interchain with G-Cter in SUMO2) cross-link involves residue Lys-327. N6-acetyllysine is present on residues Lys-333 and Lys-353. The residue at position 364 (Lys-364) is an N6-acetyllysine; alternate. Residue Lys-364 forms a Glycyl lysine isopeptide (Lys-Gly) (interchain with G-Cter in SUMO1); alternate linkage. A Phosphoserine modification is found at Ser-365. The segment covering 365 to 379 (SEKIVPEKGAGDKKP) has biased composition (basic and acidic residues). The interval 365–421 (SEKIVPEKGAGDKKPAVGKKGKKPVDAKKLKKPAGKKVVTKKPAEKKPTTEEKKSAA) is disordered. Residues 393–404 (KLKKPAGKKVVT) show a composition bias toward basic residues. Over residues 406–421 (KPAEKKPTTEEKKSAA) the composition is skewed to basic and acidic residues.

Belongs to the universal ribosomal protein uL4 family. In terms of assembly, component of the large ribosomal subunit. May bind IPO9 with low affinity. Interacts with RBM3. Post-translationally, citrullinated by PADI4.

It is found in the cytoplasm. In terms of biological role, component of the large ribosomal subunit. The ribosome is a large ribonucleoprotein complex responsible for the synthesis of proteins in the cell. This is Large ribosomal subunit protein uL4 (Rpl4) from Rattus norvegicus (Rat).